Here is a 289-residue protein sequence, read N- to C-terminus: Ketose 3-epimerase (289 aa).

The Proton donor/acceptor role is filled by Glu-146. Glu-146 provides a ligand contact to Mn(2+). Substrate contacts are provided by residues Glu-152 and 179 to 182; that span reads DTYH. Mn(2+) is bound by residues Asp-179 and His-205. Arg-211 is a binding site for substrate. The active-site Proton donor/acceptor is Glu-240. Residue Glu-240 participates in Mn(2+) binding.

The protein belongs to the hyi family. Homotetramer. Requires Mg(2+) as cofactor. It depends on Mn(2+) as a cofactor. Co(2+) serves as cofactor.

It carries out the reaction L-ribulose = L-xylulose. The catalysed reaction is D-allulose = keto-D-fructose. It catalyses the reaction keto-L-tagatose = keto-L-sorbose. The enzyme catalyses D-ribulose = D-xylulose. It carries out the reaction L-allulose = keto-L-fructose. The catalysed reaction is keto-D-tagatose = keto-D-sorbose. In terms of biological role, catalyzes the reversible C-3 epimerization of several ketoses. Shows the highest enzymatic activity for the epimerization of L-ribulose to L-xylulose. Is also able to convert D-allulose (also known as D-psicose) to D-fructose and, to a lesser extent, L-tagatose to L-sorbose, D-ribulose to D-xylulose, L-allulose to L-fructose and D-tagatose to D-sorbose. The protein is Ketose 3-epimerase of Arthrobacter globiformis.